The primary structure comprises 230 residues: Sugar fermentation stimulation protein homolog (230 aa).

This sequence belongs to the SfsA family.

This Clostridium botulinum (strain Alaska E43 / Type E3) protein is Sugar fermentation stimulation protein homolog.